A 194-amino-acid chain; its full sequence is Adenylate kinase isoenzyme 1 (194 aa).

Met-1 carries the post-translational modification N-acetylmethionine. 18-23 (GSGKGT) is an ATP binding site. Phosphoserine is present on Ser-38. The interval 38-67 (STGDLLRAEVSSGSARGKMLSEIMEKGQLV) is NMP. Residues Thr-39, Arg-44, 65–67 (QLV), 94–97 (GYPR), and Gln-101 contribute to the AMP site. Positions 131-141 (KRGETSGRVDD) are LID. Arg-132 provides a ligand contact to ATP. Residues Arg-138 and Arg-149 each contribute to the AMP site. Residue Gly-177 participates in ATP binding.

This sequence belongs to the adenylate kinase family. AK1 subfamily. Monomer. It depends on Mg(2+) as a cofactor.

Its subcellular location is the cytoplasm. It catalyses the reaction a ribonucleoside 5'-phosphate + ATP = a ribonucleoside 5'-diphosphate + ADP. It carries out the reaction AMP + ATP = 2 ADP. The enzyme catalyses dAMP + ATP = dADP + ADP. The catalysed reaction is dATP + AMP = dADP + ADP. It catalyses the reaction dAMP + dATP = 2 dADP. It carries out the reaction a 2'-deoxyribonucleoside 5'-diphosphate + ATP = a 2'-deoxyribonucleoside 5'-triphosphate + ADP. The enzyme catalyses a ribonucleoside 5'-diphosphate + ATP = a ribonucleoside 5'-triphosphate + ADP. The catalysed reaction is CDP + GTP = CTP + GDP. It catalyses the reaction GDP + ATP = GTP + ADP. It carries out the reaction UDP + ATP = UTP + ADP. The enzyme catalyses GTP + UDP = UTP + GDP. The catalysed reaction is dTDP + GTP = dTTP + GDP. It catalyses the reaction dCDP + GTP = dCTP + GDP. It carries out the reaction dGDP + ATP = dGTP + ADP. The enzyme catalyses dADP + GTP = dATP + GDP. The catalysed reaction is thiamine diphosphate + ADP = thiamine triphosphate + AMP. Its function is as follows. Catalyzes the reversible transfer of the terminal phosphate group between ATP and AMP. Also displays broad nucleoside diphosphate kinase activity. Plays an important role in cellular energy homeostasis and in adenine nucleotide metabolism. Also catalyzes at a very low rate the synthesis of thiamine triphosphate (ThTP) from thiamine diphosphate (ThDP) and ADP. The sequence is that of Adenylate kinase isoenzyme 1 from Bos taurus (Bovine).